Reading from the N-terminus, the 283-residue chain is Diaminopimelate epimerase (283 aa).

Residues asparagine 11 and asparagine 65 each coordinate substrate. The active-site Proton donor is cysteine 74. Substrate-binding positions include 75–76 (GN), asparagine 163, asparagine 196, and 214–215 (ER). Cysteine 223 functions as the Proton acceptor in the catalytic mechanism. A substrate-binding site is contributed by 224–225 (GT).

It belongs to the diaminopimelate epimerase family. Homodimer.

The protein resides in the cytoplasm. The catalysed reaction is (2S,6S)-2,6-diaminopimelate = meso-2,6-diaminopimelate. It functions in the pathway amino-acid biosynthesis; L-lysine biosynthesis via DAP pathway; DL-2,6-diaminopimelate from LL-2,6-diaminopimelate: step 1/1. In terms of biological role, catalyzes the stereoinversion of LL-2,6-diaminopimelate (L,L-DAP) to meso-diaminopimelate (meso-DAP), a precursor of L-lysine and an essential component of the bacterial peptidoglycan. The chain is Diaminopimelate epimerase from Desulfitobacterium hafniense (strain DSM 10664 / DCB-2).